The primary structure comprises 225 residues: Mediator of RNA polymerase II transcription subunit 8 (225 aa).

A disordered region spans residues 1–24 (MNSIHSANSNTVSTSEINTSQIPT). A coiled-coil region spans residues 170 to 204 (VEELKYLDSEDEKKETEENKKIENQKYEEELKITA).

This sequence belongs to the Mediator complex subunit 8 family. Component of the Mediator complex.

It localises to the nucleus. Component of the Mediator complex, a coactivator involved in the regulated transcription of nearly all RNA polymerase II-dependent genes. Mediator functions as a bridge to convey information from gene-specific regulatory proteins to the basal RNA polymerase II transcription machinery. Mediator is recruited to promoters by direct interactions with regulatory proteins and serves as a scaffold for the assembly of a functional preinitiation complex with RNA polymerase II and the general transcription factors. In Debaryomyces hansenii (strain ATCC 36239 / CBS 767 / BCRC 21394 / JCM 1990 / NBRC 0083 / IGC 2968) (Yeast), this protein is Mediator of RNA polymerase II transcription subunit 8 (MED8).